A 271-amino-acid chain; its full sequence is Acetyl-coenzyme A carboxylase carboxyl transferase subunit alpha (271 aa).

One can recognise a CoA carboxyltransferase C-terminal domain in the interval 1–247 (MSRELIRTAD…KKTILEALGE (247 aa)).

This sequence belongs to the AccA family. Acetyl-CoA carboxylase is a heterohexamer composed of biotin carboxyl carrier protein (AccB), biotin carboxylase (AccC) and two subunits each of ACCase subunit alpha (AccA) and ACCase subunit beta (AccD).

The protein localises to the cytoplasm. The enzyme catalyses N(6)-carboxybiotinyl-L-lysyl-[protein] + acetyl-CoA = N(6)-biotinyl-L-lysyl-[protein] + malonyl-CoA. Its pathway is lipid metabolism; malonyl-CoA biosynthesis; malonyl-CoA from acetyl-CoA: step 1/1. In terms of biological role, component of the acetyl coenzyme A carboxylase (ACC) complex. First, biotin carboxylase catalyzes the carboxylation of biotin on its carrier protein (BCCP) and then the CO(2) group is transferred by the carboxyltransferase to acetyl-CoA to form malonyl-CoA. This Clostridium perfringens (strain ATCC 13124 / DSM 756 / JCM 1290 / NCIMB 6125 / NCTC 8237 / Type A) protein is Acetyl-coenzyme A carboxylase carboxyl transferase subunit alpha.